An 811-amino-acid polypeptide reads, in one-letter code: tRNA(Met) cytidine acetyltransferase TmcA (811 aa).

ATP-binding residues include Gln-267 and Arg-440. The N-acetyltransferase domain occupies 474 to 663 (RKEVYLEEPD…GEFTAIVLKP (190 aa)). Residues 590–592 (IAT), Glu-630, and Arg-637 contribute to the acetyl-CoA site.

It belongs to the TmcA family.

The protein resides in the cytoplasm. The enzyme catalyses cytidine(34) in elongator tRNA(Met) + acetyl-CoA + ATP + H2O = N(4)-acetylcytidine(34) in elongator tRNA(Met) + ADP + phosphate + CoA + H(+). The catalysed reaction is a cytidine in RNA + acetyl-CoA + ATP + H2O = an N(4)-acetylcytidine in RNA + ADP + phosphate + CoA + H(+). It carries out the reaction a cytidine in tRNA + acetyl-CoA + ATP + H2O = an N(4)-acetylcytidine in tRNA + ADP + phosphate + CoA + H(+). It catalyses the reaction a cytidine in mRNA + acetyl-CoA + ATP + H2O = an N(4)-acetylcytidine in mRNA + ADP + phosphate + CoA + H(+). Functionally, catalyzes the formation of N(4)-acetylcytidine (ac(4)C) at the wobble position of tRNA(Met), by using acetyl-CoA as an acetyl donor and ATP (or GTP). Its function is as follows. Catalyzes the formation of 404 N(4)-acetylcytidine (ac(4)C) sites in RNA, almost always on the middle C of a CCG motif. There 173 ac(4)C sites in rRNA, 35 in non-coding (nc)RNA, 119 in mRNA and 77 in tRNA. More acetylation is observed at 85 and 95 than at 65 or 75 degrees Celsius. In Thermococcus kodakarensis (strain ATCC BAA-918 / JCM 12380 / KOD1) (Pyrococcus kodakaraensis (strain KOD1)), this protein is tRNA(Met) cytidine acetyltransferase TmcA.